A 416-amino-acid chain; its full sequence is MSKADIIVGIQWGDEGKGKVVDKLCENYDFVCRSAGGHNAGHTIWVNGVRYALHLMPSGVLHPRCINIIGNGVVVSPEVLIAEMAQFENLKGRLYISDRAHLNLKHHSLIDIAKEKLKGKNAIGTTGKGIGPSYADKINRTGHRVGELLEPQRLCEALIKDFEANKTFFEMLEIEIPSAEELLADLKRFNEILTPYITDTTRMLWKALDEDKRVLLEGAQGSMLDIDHGTYPYVTSSSTISAGALTGLGLNPKEAGNIIGIVKAYATRVGNGAFPTEDKGEDGEKIAQIGKEIGVSTGRKRRCGWFDAVAVRYTARLNGLDALSLMKLDVLDGFEKIKICRAYEYKGMEIDYIPSDLENVQPIYEEMDGWDKVFGIKDYDLLPENAKKYIARLEELAGVKVKYISTSPERDDTIIL.

GTP contacts are provided by residues 13 to 19 (GDEGKGK) and 41 to 43 (GHT). The Proton acceptor role is filled by Asp-14. Mg(2+) is bound by residues Asp-14 and Gly-41. Residues 14-17 (DEGK), 39-42 (NAGH), Thr-126, Arg-140, Gln-220, Thr-235, and Arg-299 each bind IMP. His-42 acts as the Proton donor in catalysis. 295-301 (VSTGRKR) lines the substrate pocket. GTP-binding positions include Arg-301, 327 to 329 (KLD), and 405 to 407 (STS).

Belongs to the adenylosuccinate synthetase family. In terms of assembly, homodimer. It depends on Mg(2+) as a cofactor.

It is found in the cytoplasm. It catalyses the reaction IMP + L-aspartate + GTP = N(6)-(1,2-dicarboxyethyl)-AMP + GDP + phosphate + 2 H(+). It functions in the pathway purine metabolism; AMP biosynthesis via de novo pathway; AMP from IMP: step 1/2. Its function is as follows. Plays an important role in the de novo pathway of purine nucleotide biosynthesis. Catalyzes the first committed step in the biosynthesis of AMP from IMP. In Campylobacter jejuni subsp. jejuni serotype O:23/36 (strain 81-176), this protein is Adenylosuccinate synthetase.